The chain runs to 207 residues: Large ribosomal subunit protein uL4 (207 aa).

Residues 44 to 71 (RRQGTQSAKTRAEVRGGGRKPWKQKGTG) are disordered. Residues 60-71 (GGRKPWKQKGTG) show a composition bias toward basic residues.

The protein belongs to the universal ribosomal protein uL4 family. In terms of assembly, part of the 50S ribosomal subunit.

Functionally, one of the primary rRNA binding proteins, this protein initially binds near the 5'-end of the 23S rRNA. It is important during the early stages of 50S assembly. It makes multiple contacts with different domains of the 23S rRNA in the assembled 50S subunit and ribosome. Its function is as follows. Forms part of the polypeptide exit tunnel. This Alkaliphilus oremlandii (strain OhILAs) (Clostridium oremlandii (strain OhILAs)) protein is Large ribosomal subunit protein uL4.